Reading from the N-terminus, the 112-residue chain is Small ribosomal subunit protein bS6c (112 aa).

The protein belongs to the bacterial ribosomal protein bS6 family.

The protein resides in the plastid. It is found in the chloroplast. Binds together with bS18 to 16S ribosomal RNA. The chain is Small ribosomal subunit protein bS6c (rps6) from Porphyra purpurea (Red seaweed).